A 610-amino-acid polypeptide reads, in one-letter code: Phosphoprotein 85 (610 aa).

Disordered stretches follow at residues 462-530 and 543-610; these read NEGR…NISD and EEPM…DARL. The segment covering 467-478 has biased composition (low complexity); that stretch reads SSRASPSHSTST. The segment covering 484 to 495 has biased composition (polar residues); it reads PQSDRSTPTSIL. Composition is skewed to low complexity over residues 503-515 and 552-567; these read SNSR…FSQE and SPQS…RQSR. Residues 581–592 are compositionally biased toward polar residues; sequence VPSSQTRRQNNA. A compositionally biased stretch (basic and acidic residues) spans 600–610; it reads RLTEMMNDARL.

The protein belongs to the herpesviridae pp85 family. Phosphorylated.

Its subcellular location is the virion tegument. It localises to the host cytoplasm. The sequence is that of Phosphoprotein 85 (U14) from Homo sapiens (Human).